A 64-amino-acid polypeptide reads, in one-letter code: Long neurotoxin MS2 (64 aa).

5 disulfide bridges follow: Cys3–Cys24, Cys6–Cys11, Cys17–Cys41, Cys45–Cys57, and Cys58–Cys63.

This sequence belongs to the three-finger toxin family. Ancestral subfamily. As to expression, expressed by the venom gland.

It localises to the secreted. In terms of biological role, produces peripheral paralysis by blocking neuromuscular transmission at the postsynaptic site. Very weak inhibitor of the endogenous nicotinic acetylcholine receptors (nAChR) in the human rhabdomyosarcoma TE 671 cell line. Not toxic to mice by intraperitoneal injection or to zebrafish by injection at the back of the dorsolateral region. The polypeptide is Long neurotoxin MS2 (Micrurus surinamensis (Surinam coral snake)).